The following is a 64-amino-acid chain: DNA gyrase inhibitor YacG (64 aa).

Zn(2+) is bound by residues C9, C12, C28, and C32. A disordered region spans residues D42–Y64. Residues S54 to Y64 are compositionally biased toward acidic residues.

The protein belongs to the DNA gyrase inhibitor YacG family. As to quaternary structure, interacts with GyrB. Zn(2+) serves as cofactor.

Its function is as follows. Inhibits all the catalytic activities of DNA gyrase by preventing its interaction with DNA. Acts by binding directly to the C-terminal domain of GyrB, which probably disrupts DNA binding by the gyrase. The polypeptide is DNA gyrase inhibitor YacG (Vibrio vulnificus (strain CMCP6)).